The sequence spans 159 residues: Transmembrane protein 42 (159 aa).

The next 4 helical transmembrane spans lie at 37–57, 59–79, 100–120, and 124–144; these read FWGVFNCLCAGAFGALAAASA, LAFGSEVSMGLCVLGIIVMAS, IASVTVTFSNILSSAFLGYVL, and CQEVLWWGGVFLILCGLTLIH.

It localises to the membrane. In Homo sapiens (Human), this protein is Transmembrane protein 42 (TMEM42).